A 580-amino-acid polypeptide reads, in one-letter code: FAD-dependent monooxygenase yanF (580 aa).

A disordered region spans residues 1 to 21; that stretch reads MSSSAECRPIGWGGWGPDPNT. Residues 150–322 form the FAD-binding PCMH-type domain; sequence CRLNASCIVT…VEYDLTTNTG (173 aa). Position 187 is a pros-8alpha-FAD histidine (H187).

It belongs to the oxygen-dependent FAD-linked oxidoreductase family.

It participates in secondary metabolite biosynthesis; terpenoid biosynthesis. FAD-dependent monooxygenase; part of the gene cluster that mediates the biosynthesis of yanuthone D, a fungal isoprenoid epoxycyclohexenone that acts as an antibiotic against fungi and bacteria. The first step of the pathway is the synthesis of 6-methylsalicylic acid (6-MSA) by the polyketide synthase yanA. 6-MSA is then converted to m-cresol by the decarboxylase yanB. The cytochrome P450 monooxygenase yanC then catalyzes the oxidation of m-cresol to toluquinol. Epoxidation of toluquinol is then performed by the short chain dehydrogenase yanD, with the help of yanE, and a further prenylated by yanG leads to 7-deacetoxyyanuthone A. The next step is the hydroxylation of C-22 of 7-deacetoxyyanuthone A by the cytochrome P450 monooxygenase yanH to yield 22-deacetylyanuthone A. O-Mevalon transferase yanI then attaches mevalon to the hydroxyl group of 22-deacetylyanuthone A to produce yanuthone E. Finally, the FAD-dependent monooxygenase yanF oxidizes the hydroxyl group at C15 of yanuthone E to form yanuthone D. Furthermore, several branching points in the pathway lead to the production of yanuthones F and G from 7-deacetoxyyanuthone A; yanuthones H and I from 22-deacetylyanuthone A; and yanuthone J from yanuthone E. The chain is FAD-dependent monooxygenase yanF from Aspergillus niger (strain ATCC 1015 / CBS 113.46 / FGSC A1144 / LSHB Ac4 / NCTC 3858a / NRRL 328 / USDA 3528.7).